The chain runs to 198 residues: RxLR effector protein CRE4 (198 aa).

An N-terminal signal peptide occupies residues methionine 1–proline 20. The short motif at arginine 43 to arginine 52 is the RxLR-dEER element.

It belongs to the RxLR effector family.

It localises to the secreted. It is found in the host cytoplasm. The protein localises to the host nucleus. The protein resides in the host nucleolus. Its function is as follows. Effector that is involved in host plant infection. Contributes to virulence during the early infection stage, by inhibiting plant defense responses induced by both PAMP-triggered immunity (PTI) and effector-triggered immunity (ETI). The sequence is that of RxLR effector protein CRE4 (CRE4) from Phytophthora infestans (strain T30-4) (Potato late blight agent).